A 229-amino-acid polypeptide reads, in one-letter code: Potassium/proton antiporter CemA (229 aa).

The next 3 helical transmembrane spans lie at 7–27 (FTPL…SLSF), 107–127 (ILHF…SLLG), and 189–209 (IISG…KYWI).

Belongs to the CemA family.

It localises to the plastid. The protein localises to the chloroplast inner membrane. It catalyses the reaction K(+)(in) + H(+)(out) = K(+)(out) + H(+)(in). Functionally, contributes to K(+)/H(+) antiport activity by supporting proton efflux to control proton extrusion and homeostasis in chloroplasts in a light-dependent manner to modulate photosynthesis. Prevents excessive induction of non-photochemical quenching (NPQ) under continuous-light conditions. Indirectly promotes efficient inorganic carbon uptake into chloroplasts. The chain is Potassium/proton antiporter CemA from Lactuca sativa (Garden lettuce).